A 242-amino-acid chain; its full sequence is Ribose-5-phosphate isomerase A (242 aa).

Residues 39 to 42, 95 to 98, and 108 to 111 each bind substrate; these read SGST, DGAD, and KGGG. E117 (proton acceptor) is an active-site residue. A substrate-binding site is contributed by K135.

The protein belongs to the ribose 5-phosphate isomerase family. Homodimer.

It catalyses the reaction aldehydo-D-ribose 5-phosphate = D-ribulose 5-phosphate. It participates in carbohydrate degradation; pentose phosphate pathway; D-ribose 5-phosphate from D-ribulose 5-phosphate (non-oxidative stage): step 1/1. Functionally, catalyzes the reversible conversion of ribose-5-phosphate to ribulose 5-phosphate. The polypeptide is Ribose-5-phosphate isomerase A (Chlamydia trachomatis serovar A (strain ATCC VR-571B / DSM 19440 / HAR-13)).